We begin with the raw amino-acid sequence, 262 residues long: Ribosomal RNA small subunit methyltransferase A (262 aa).

Residues N14, L16, G41, E62, D87, and N109 each coordinate S-adenosyl-L-methionine.

This sequence belongs to the class I-like SAM-binding methyltransferase superfamily. rRNA adenine N(6)-methyltransferase family. RsmA subfamily.

It localises to the cytoplasm. It carries out the reaction adenosine(1518)/adenosine(1519) in 16S rRNA + 4 S-adenosyl-L-methionine = N(6)-dimethyladenosine(1518)/N(6)-dimethyladenosine(1519) in 16S rRNA + 4 S-adenosyl-L-homocysteine + 4 H(+). Functionally, specifically dimethylates two adjacent adenosines (A1518 and A1519) in the loop of a conserved hairpin near the 3'-end of 16S rRNA in the 30S particle. May play a critical role in biogenesis of 30S subunits. This Francisella tularensis subsp. tularensis (strain FSC 198) protein is Ribosomal RNA small subunit methyltransferase A.